Here is a 419-residue protein sequence, read N- to C-terminus: Dual specificity mitogen-activated protein kinase kinase 7 (419 aa).

Position 2 is an N-acetylalanine (alanine 2). Residues 2-30 (AASSLEQKLSRLEAKLKQENREARRRIDL) adopt a coiled-coil conformation. Positions 18-30 (KQENREARRRIDL) are enriched in basic and acidic residues. Positions 18–77 (KQENREARRRIDLNLDISPQRPRPTLQLPLANDGGSRSPSSESSPQHPTPPSRPRHMLGL) are disordered. Residues 36–63 (PQRPRPTLQLPLANDGGSRSPSSESSPQ) are compositionally biased toward low complexity. A d Domain region spans residues 37-57 (QRPRPTLQLPLANDGGSRSPS). A Protein kinase domain is found at 120 to 380 (LENLGEMGSG…YNKLLEHSFI (261 aa)). Residues 126 to 134 (MGSGTCGQV) and lysine 149 each bind ATP. The active-site Proton acceptor is the aspartate 243. Serine 271 carries the post-translational modification Phosphoserine; by MAP3K. Threonine 275 carries the post-translational modification Phosphothreonine; by MAP3K. The segment at 377 to 400 (HSFIKHYETLEVDVASWFKDVMAK) is DVD domain. At serine 411 the chain carries Phosphoserine.

Belongs to the protein kinase superfamily. STE Ser/Thr protein kinase family. MAP kinase kinase subfamily. In terms of assembly, interacts with VRK2. Interacts (via its D domain) with its substrates MAPK8/JNK1, MAPK9/JNK2 and MAPK10/JNK3. Interacts (via its DVD domain) with MAP3Ks activators like MAP3K5/ASK1 and MAP3K1/MEKK1. Interacts with MAPK8IP1/JIP1, MAPK8IP2/JIP2 and MAPK8IP3/JIP3 scaffold proteins. Interacts with RASSF7, the interaction promotes phosphorylation. Found in a complex with SH3RF1, RAC1, MAP3K11/MLK3, MAPK8IP1/JIP1 and MAPK8/JNK1. Found in a complex with SH3RF1, RAC2, MAP3K7/TAK1, MAPK8IP1/JIP1, MAPK8/JNK1 and MAPK9/JNK2. It depends on Mg(2+) as a cofactor. In terms of processing, activated by phosphorylation on Ser-271 and Thr-275 by MAP kinase kinase kinases (MAP3Ks).

The protein resides in the nucleus. It is found in the cytoplasm. The enzyme catalyses L-seryl-[protein] + ATP = O-phospho-L-seryl-[protein] + ADP + H(+). It catalyses the reaction L-threonyl-[protein] + ATP = O-phospho-L-threonyl-[protein] + ADP + H(+). The catalysed reaction is L-tyrosyl-[protein] + ATP = O-phospho-L-tyrosyl-[protein] + ADP + H(+). With respect to regulation, activated by phosphorylation by specific MAP kinase kinase kinases such as MAP3K1/MEKK1, MAP3K3/MEKK3, MAP3K11/MLK3 and MAP3K12/DLK. Dual specificity protein kinase which acts as an essential component of the MAP kinase signal transduction pathway. Essential component of the stress-activated protein kinase/c-Jun N-terminal kinase (SAP/JNK) signaling pathway. With MAP2K4/MKK4, is the one of the only known kinase to directly activate the stress-activated protein kinase/c-Jun N-terminal kinases MAPK8/JNK1, MAPK9/JNK2 and MAPK10/JNK3. MAP2K4/MKK4 and MAP2K7/MKK7 both activate the JNKs by phosphorylation, but they differ in their preference for the phosphorylation site in the Thr-Pro-Tyr motif. MAP2K4/MKK4 shows preference for phosphorylation of the Tyr residue and MAP2K7/MKK7 for the Thr residue. The monophosphorylation of JNKs on the Thr residue is sufficient to increase JNK activity indicating that MAP2K7/MKK7 is important to trigger JNK activity, while the additional phosphorylation of the Tyr residue by MAP2K4/MKK4 ensures optimal JNK activation. Has a specific role in JNK signal transduction pathway activated by pro-inflammatory cytokines. The MKK/JNK signaling pathway is also involved in mitochondrial death signaling pathway, including the release cytochrome c, leading to apoptosis. Part of a non-canonical MAPK signaling pathway, composed of the upstream MAP3K12 kinase and downstream MAP kinases MAPK1/ERK2 and MAPK3/ERK1, that enhances the AP-1-mediated transcription of APP in response to APOE. This is Dual specificity mitogen-activated protein kinase kinase 7 from Rattus norvegicus (Rat).